A 478-amino-acid chain; its full sequence is F-box/kelch-repeat protein At1g51550 (478 aa).

The tract at residues 1-20 is disordered; that stretch reads MAAESTRNSSPPSTSQSSSP. Residues 9–20 show a composition bias toward low complexity; that stretch reads SSPPSTSQSSSP. Residues 18–64 form the F-box domain; sequence SSPIINLPDDHLLTILLLLPVDSILSFSMTCKRYKSLACSDSLWEAL. 2 Kelch repeats span residues 135 to 187 and 246 to 299; these read LVLF…VIGE and KMVV…CIRE.

In Arabidopsis thaliana (Mouse-ear cress), this protein is F-box/kelch-repeat protein At1g51550.